Reading from the N-terminus, the 172-residue chain is MEIGQYQPNLDGDGLRIGIVQSRFNEPVCNGLADACIEELERLGVTGEDVLLVTVPGALEIPLALQKLAESGQFDALIALGAVIRGETYHFELVSNESGSGISRIALDFGIPVANAVLTTENDEQAVARMTEKGRDAARTAVEMANLAVALEQLDGDEDDEGEGEDDEEERA.

Residues Phe24, 58–60, and 82–84 contribute to the 5-amino-6-(D-ribitylamino)uracil site; these read ALE and AVI. Residue 87–88 coordinates (2S)-2-hydroxy-3-oxobutyl phosphate; the sequence is ET. His90 serves as the catalytic Proton donor. Asn115 lines the 5-amino-6-(D-ribitylamino)uracil pocket. Arg129 lines the (2S)-2-hydroxy-3-oxobutyl phosphate pocket. Residues 150 to 172 form a disordered region; sequence ALEQLDGDEDDEGEGEDDEEERA. Residues 154–172 show a composition bias toward acidic residues; the sequence is LDGDEDDEGEGEDDEEERA.

The protein belongs to the DMRL synthase family.

The enzyme catalyses (2S)-2-hydroxy-3-oxobutyl phosphate + 5-amino-6-(D-ribitylamino)uracil = 6,7-dimethyl-8-(1-D-ribityl)lumazine + phosphate + 2 H2O + H(+). Its pathway is cofactor biosynthesis; riboflavin biosynthesis; riboflavin from 2-hydroxy-3-oxobutyl phosphate and 5-amino-6-(D-ribitylamino)uracil: step 1/2. Catalyzes the formation of 6,7-dimethyl-8-ribityllumazine by condensation of 5-amino-6-(D-ribitylamino)uracil with 3,4-dihydroxy-2-butanone 4-phosphate. This is the penultimate step in the biosynthesis of riboflavin. The chain is 6,7-dimethyl-8-ribityllumazine synthase from Paraburkholderia phymatum (strain DSM 17167 / CIP 108236 / LMG 21445 / STM815) (Burkholderia phymatum).